The primary structure comprises 464 residues: Protein FAM90A26 (464 aa).

Disordered stretches follow at residues 1 to 42 (MMAC…DPRL), 70 to 293 (PPTL…AKRP), 312 to 390 (PFQI…DGAQ), and 410 to 442 (AAPSFHSPEKPGAFLAQSPHVSEKSEVPRVRVP). 2 stretches are compositionally biased toward basic and acidic residues: residues 74–83 (GKKEGKENLK) and 97–114 (NKDKGEKEERPRQQDPQR). Low complexity predominate over residues 178–197 (SALASLSPLRKASLSSSSSL).

It belongs to the FAM90 family.

This Homo sapiens (Human) protein is Protein FAM90A26.